We begin with the raw amino-acid sequence, 617 residues long: Dihydroxy-acid dehydratase (617 aa).

Asp82 lines the Mg(2+) pocket. Cys123 contributes to the [2Fe-2S] cluster binding site. 2 residues coordinate Mg(2+): Asp124 and Lys125. An N6-carboxylysine modification is found at Lys125. Cys197 provides a ligand contact to [2Fe-2S] cluster. Glu497 provides a ligand contact to Mg(2+). Ser523 (proton acceptor) is an active-site residue.

Belongs to the IlvD/Edd family. Homodimer. Requires [2Fe-2S] cluster as cofactor. Mg(2+) is required as a cofactor.

The catalysed reaction is (2R)-2,3-dihydroxy-3-methylbutanoate = 3-methyl-2-oxobutanoate + H2O. The enzyme catalyses (2R,3R)-2,3-dihydroxy-3-methylpentanoate = (S)-3-methyl-2-oxopentanoate + H2O. The protein operates within amino-acid biosynthesis; L-isoleucine biosynthesis; L-isoleucine from 2-oxobutanoate: step 3/4. Its pathway is amino-acid biosynthesis; L-valine biosynthesis; L-valine from pyruvate: step 3/4. Functionally, functions in the biosynthesis of branched-chain amino acids. Catalyzes the dehydration of (2R,3R)-2,3-dihydroxy-3-methylpentanoate (2,3-dihydroxy-3-methylvalerate) into 2-oxo-3-methylpentanoate (2-oxo-3-methylvalerate) and of (2R)-2,3-dihydroxy-3-methylbutanoate (2,3-dihydroxyisovalerate) into 2-oxo-3-methylbutanoate (2-oxoisovalerate), the penultimate precursor to L-isoleucine and L-valine, respectively. The sequence is that of Dihydroxy-acid dehydratase from Streptomyces coelicolor (strain ATCC BAA-471 / A3(2) / M145).